A 306-amino-acid polypeptide reads, in one-letter code: MEILPVGEESLGVRSMCLYVETRDVRILFDAGVSLAPRRFGLPPHPRELERARSVRGEIVRLAQQADIITVSHYHRDHFTPWYPSVYMATDGETYKKVYGGKKVLMKSPADLNWSQRRRHYGLAKALQEAGAKAVYADGGEWRIGGTVIRASPPLWHGPAGSKTGRVIAFAVSDGEERLVFVPDVEGPVEPEPVAFLEEVKPTVVVVGGPPTYLGWELERALQRLTEIIDIGPHTLVLAHHLLRDLAWREKIEAVLQRAEKRGVRVATYAGLLGRKDELLEAMRRDLYAAEPAAAQPAEEGIDEGD.

Belongs to the UPF0282 family.

The chain is UPF0282 protein Pars_1056 from Pyrobaculum arsenaticum (strain DSM 13514 / JCM 11321 / PZ6).